A 130-amino-acid chain; its full sequence is Small ribosomal subunit protein uS8 (130 aa).

This sequence belongs to the universal ribosomal protein uS8 family. As to quaternary structure, part of the 30S ribosomal subunit. Contacts proteins S5 and S12.

Functionally, one of the primary rRNA binding proteins, it binds directly to 16S rRNA central domain where it helps coordinate assembly of the platform of the 30S subunit. In Opitutus terrae (strain DSM 11246 / JCM 15787 / PB90-1), this protein is Small ribosomal subunit protein uS8.